Consider the following 156-residue polypeptide: MASKFFSNLFGVVDDEPETADYYEDQQPAQQAPAPVPTPAPTRSNKVVSINNARVAPQPNSSSKIELVEPRVYGDGKEIVNHLLNGNAVIVNFDQMDAKVAFRIVEYMKGATYAISGKIERIDAEIFLCTPQNFEISGKLAPTLSSDGLDDRGDRY.

The segment at 17-44 (PETADYYEDQQPAQQAPAPVPTPAPTRS) is disordered.

The protein belongs to the SepF family. In terms of assembly, homodimer. Interacts with FtsZ.

Its subcellular location is the cytoplasm. In terms of biological role, cell division protein that is part of the divisome complex and is recruited early to the Z-ring. Probably stimulates Z-ring formation, perhaps through the cross-linking of FtsZ protofilaments. Its function overlaps with FtsA. The chain is Cell division protein SepF from Limosilactobacillus fermentum (strain NBRC 3956 / LMG 18251) (Lactobacillus fermentum).